A 41-amino-acid chain; its full sequence is Large ribosomal subunit protein bL36 (41 aa).

Belongs to the bacterial ribosomal protein bL36 family.

The polypeptide is Large ribosomal subunit protein bL36 (Dinoroseobacter shibae (strain DSM 16493 / NCIMB 14021 / DFL 12)).